A 233-amino-acid chain; its full sequence is Uridylate kinase (233 aa).

Residues 9–12 (KLSG), Gly-51, and Arg-55 each bind ATP. Residues Asp-69 and 130–137 (TGNPFFST) each bind UMP. The ATP site is built by Asn-158, Tyr-164, and Asp-167.

It belongs to the UMP kinase family. In terms of assembly, homohexamer.

It localises to the cytoplasm. It catalyses the reaction UMP + ATP = UDP + ADP. The protein operates within pyrimidine metabolism; CTP biosynthesis via de novo pathway; UDP from UMP (UMPK route): step 1/1. With respect to regulation, inhibited by UTP. Its function is as follows. Catalyzes the reversible phosphorylation of UMP to UDP. In Thermus thermophilus (strain ATCC BAA-163 / DSM 7039 / HB27), this protein is Uridylate kinase.